Reading from the N-terminus, the 380-residue chain is Nucleoporin Nup43 (380 aa).

M1 is modified (N-acetylmethionine). WD repeat units follow at residues 8 to 57 (FVSQ…NLDS), 72 to 110 (RHHG…QTLS), 127 to 166 (PSYS…AVRT), 170 to 208 (ADSS…NEPS), 215 to 255 (GDRV…MPVS), and 259 to 299 (AHEA…PEKS).

In terms of assembly, component of the Nup107-160 subcomplex of the nuclear pore complex (NPC). The Nup107-160 subcomplex includes NUP160, NUP133, NUP107, NUP98, NUP85, NUP43, NUP37, SEH1 and SEC13.

The protein localises to the chromosome. It is found in the centromere. The protein resides in the kinetochore. Its subcellular location is the nucleus. It localises to the nuclear pore complex. Its function is as follows. Component of the Nup107-160 subcomplex of the nuclear pore complex (NPC). The Nup107-160 subcomplex is required for the assembly of a functional NPC. The Nup107-160 subcomplex is also required for normal kinetochore microtubule attachment, mitotic progression and chromosome segregation. The protein is Nucleoporin Nup43 (NUP43) of Homo sapiens (Human).